The chain runs to 246 residues: tRNA (guanine-N(1)-)-methyltransferase (246 aa).

S-adenosyl-L-methionine is bound by residues Gly113 and 133–138 (IGDYVL).

This sequence belongs to the RNA methyltransferase TrmD family. Homodimer.

Its subcellular location is the cytoplasm. The enzyme catalyses guanosine(37) in tRNA + S-adenosyl-L-methionine = N(1)-methylguanosine(37) in tRNA + S-adenosyl-L-homocysteine + H(+). Its function is as follows. Specifically methylates guanosine-37 in various tRNAs. This Haemophilus influenzae (strain PittEE) protein is tRNA (guanine-N(1)-)-methyltransferase.